Consider the following 290-residue polypeptide: NAD kinase (290 aa).

D75 acts as the Proton acceptor in catalysis. Residues 75-76 (DG), 148-149 (NE), D178, 189-194 (TAYNIS), and Q247 each bind NAD(+).

Belongs to the NAD kinase family. A divalent metal cation is required as a cofactor.

The protein localises to the cytoplasm. The enzyme catalyses NAD(+) + ATP = ADP + NADP(+) + H(+). Functionally, involved in the regulation of the intracellular balance of NAD and NADP, and is a key enzyme in the biosynthesis of NADP. Catalyzes specifically the phosphorylation on 2'-hydroxyl of the adenosine moiety of NAD to yield NADP. In Wolinella succinogenes (strain ATCC 29543 / DSM 1740 / CCUG 13145 / JCM 31913 / LMG 7466 / NCTC 11488 / FDC 602W) (Vibrio succinogenes), this protein is NAD kinase.